The sequence spans 473 residues: Serine carboxypeptidase-like 25 (473 aa).

The first 22 residues, 1–22 (MAMAKLAIFTTLMAILVMTSQG), serve as a signal peptide directing secretion. N-linked (GlcNAc...) asparagine glycans are attached at residues N46 and N143. Disulfide bonds link C92/C358, C252/C263, and C288/C326. Residue S185 is part of the active site. N-linked (GlcNAc...) asparagine glycosylation is found at N289, N299, N347, and N367. Active-site residues include D395 and H447.

It belongs to the peptidase S10 family. In terms of tissue distribution, ubiquitous.

The protein resides in the secreted. In terms of biological role, probable carboxypeptidase. This Arabidopsis thaliana (Mouse-ear cress) protein is Serine carboxypeptidase-like 25 (SCPL25).